The primary structure comprises 106 residues: MVQYRALVIAVILLLSTTVPEVHSKSIIDRERRDWLVIPDAAAAYIYEAVNKVSPRAGQFLLDVSQTTVVSGIRNFLINETARLTKLAEQLMEKIKNLCYTKVLGY.

The N-terminal stretch at 1–24 (MVQYRALVIAVILLLSTTVPEVHS) is a signal peptide.

Belongs to the apovitellenin family. As to quaternary structure, homodimer; disulfide-linked. As to expression, produced by the liver, secreted into the blood and then sequestred by receptor mediated endocytosis into growing oocytes.

Functionally, protein component of the very low density lipoprotein (VLDL) of egg-laying females. Potent lipoprotein lipase inhibitor, preventing the loss of triglycerides from VLDL on their way from the liver to the growing oocytes. This chain is Apovitellenin-1, found in Gallus gallus (Chicken).